The following is a 347-amino-acid chain: S-adenosylmethionine:tRNA ribosyltransferase-isomerase (347 aa).

Belongs to the QueA family. As to quaternary structure, monomer.

Its subcellular location is the cytoplasm. It catalyses the reaction 7-aminomethyl-7-carbaguanosine(34) in tRNA + S-adenosyl-L-methionine = epoxyqueuosine(34) in tRNA + adenine + L-methionine + 2 H(+). It participates in tRNA modification; tRNA-queuosine biosynthesis. Transfers and isomerizes the ribose moiety from AdoMet to the 7-aminomethyl group of 7-deazaguanine (preQ1-tRNA) to give epoxyqueuosine (oQ-tRNA). In Xylella fastidiosa (strain M12), this protein is S-adenosylmethionine:tRNA ribosyltransferase-isomerase.